A 385-amino-acid polypeptide reads, in one-letter code: Arginine biosynthesis bifunctional protein ArgJ (385 aa).

Substrate contacts are provided by threonine 142, lysine 168, threonine 179, glutamate 259, asparagine 380, and threonine 385. Catalysis depends on threonine 179, which acts as the Nucleophile.

This sequence belongs to the ArgJ family. In terms of assembly, heterotetramer of two alpha and two beta chains.

The protein resides in the cytoplasm. It catalyses the reaction N(2)-acetyl-L-ornithine + L-glutamate = N-acetyl-L-glutamate + L-ornithine. The enzyme catalyses L-glutamate + acetyl-CoA = N-acetyl-L-glutamate + CoA + H(+). Its pathway is amino-acid biosynthesis; L-arginine biosynthesis; L-ornithine and N-acetyl-L-glutamate from L-glutamate and N(2)-acetyl-L-ornithine (cyclic): step 1/1. It participates in amino-acid biosynthesis; L-arginine biosynthesis; N(2)-acetyl-L-ornithine from L-glutamate: step 1/4. In terms of biological role, catalyzes two activities which are involved in the cyclic version of arginine biosynthesis: the synthesis of N-acetylglutamate from glutamate and acetyl-CoA as the acetyl donor, and of ornithine by transacetylation between N(2)-acetylornithine and glutamate. This Leptospira interrogans serogroup Icterohaemorrhagiae serovar copenhageni (strain Fiocruz L1-130) protein is Arginine biosynthesis bifunctional protein ArgJ.